Here is a 310-residue protein sequence, read N- to C-terminus: Vomeronasal type-1 receptor 40 (310 aa).

Residues Met-1 to Glu-20 are Extracellular-facing. A helical transmembrane segment spans residues Val-21–Gly-41. The Cytoplasmic segment spans residues Glu-42–Leu-50. A helical membrane pass occupies residues Tyr-51 to Val-71. The Extracellular portion of the chain corresponds to Asp-72 to Arg-93. A disulfide bridge links Cys-85 with Cys-172. Residues Leu-94–Leu-114 traverse the membrane as a helical segment. The Cytoplasmic segment spans residues Ser-115–Gly-134. Residues Ala-135–Ile-155 traverse the membrane as a helical segment. Over Ala-156–Ala-190 the chain is Extracellular. The N-linked (GlcNAc...) asparagine glycan is linked to Asn-159. A helical transmembrane segment spans residues Ile-191 to Leu-211. Residues Trp-212–Arg-238 are Cytoplasmic-facing. A helical membrane pass occupies residues Thr-239–Tyr-259. Residues Ser-260 to Ser-268 lie on the Extracellular side of the membrane. The chain crosses the membrane as a helical span at residues Ile-269 to Phe-289. The Cytoplasmic portion of the chain corresponds to Ile-290–Ile-310.

It belongs to the G-protein coupled receptor 1 family.

The protein localises to the cell membrane. Its function is as follows. Putative pheromone receptor implicated in the regulation of social and reproductive behavior. This chain is Vomeronasal type-1 receptor 40 (Vmn1r40), found in Mus musculus (Mouse).